The following is a 205-amino-acid chain: MSAFITFEGPEGSGKTTVINKVYHRLVKDYDVIMTREPGGVPTGEEIRKIVLEGNDMDIRTEAMLFAASRREHLVLKVIPALKEGKVVLCDRYIDSSLAYQGYARGIGVEEVRALNEFAINGLYPDLTIYLNVSAEVGRERIIKNSRDQNRLDQEDLKFHEKVIEGYQEIIHNESQRFKSVNADQPLENVVEDTYQTIIKYLEKI.

9–16 (GPEGSGKT) contacts ATP.

Belongs to the thymidylate kinase family.

The catalysed reaction is dTMP + ATP = dTDP + ADP. Functionally, phosphorylation of dTMP to form dTDP in both de novo and salvage pathways of dTTP synthesis. In Staphylococcus aureus (strain MSSA476), this protein is Thymidylate kinase.